The following is a 1217-amino-acid chain: ATP-dependent helicase/nuclease subunit A (1217 aa).

Residues 10 to 475 form the UvrD-like helicase ATP-binding domain; that stretch reads VIWTDAQWQS…IDLSQNFRSR (466 aa). 31–38 contributes to the ATP binding site; it reads AAAGSGKT. Residues 476 to 786 form the UvrD-like helicase C-terminal domain; that stretch reads KEVLSTTNYI…RMMTIHSSKG (311 aa).

It belongs to the helicase family. AddA subfamily. Heterodimer of AddA and AddB/RexB. It depends on Mg(2+) as a cofactor.

The catalysed reaction is Couples ATP hydrolysis with the unwinding of duplex DNA by translocating in the 3'-5' direction.. It carries out the reaction ATP + H2O = ADP + phosphate + H(+). Its function is as follows. The heterodimer acts as both an ATP-dependent DNA helicase and an ATP-dependent, dual-direction single-stranded exonuclease. Recognizes the chi site generating a DNA molecule suitable for the initiation of homologous recombination. The AddA nuclease domain is required for chi fragment generation; this subunit has the helicase and 3' -&gt; 5' nuclease activities. The protein is ATP-dependent helicase/nuclease subunit A of Staphylococcus aureus (strain MW2).